The primary structure comprises 97 residues: ATP-dependent Clp protease adapter protein ClpS (97 aa).

It belongs to the ClpS family. As to quaternary structure, binds to the N-terminal domain of the chaperone ClpA.

Functionally, involved in the modulation of the specificity of the ClpAP-mediated ATP-dependent protein degradation. The chain is ATP-dependent Clp protease adapter protein ClpS from Nautilia profundicola (strain ATCC BAA-1463 / DSM 18972 / AmH).